The primary structure comprises 456 residues: Methylenetetrahydrofolate--tRNA-(uracil-5-)-methyltransferase TrmFO (456 aa).

12-17 lines the FAD pocket; the sequence is GGGLAG.

Belongs to the MnmG family. TrmFO subfamily. FAD serves as cofactor.

It is found in the cytoplasm. It catalyses the reaction uridine(54) in tRNA + (6R)-5,10-methylene-5,6,7,8-tetrahydrofolate + NADH + H(+) = 5-methyluridine(54) in tRNA + (6S)-5,6,7,8-tetrahydrofolate + NAD(+). The catalysed reaction is uridine(54) in tRNA + (6R)-5,10-methylene-5,6,7,8-tetrahydrofolate + NADPH + H(+) = 5-methyluridine(54) in tRNA + (6S)-5,6,7,8-tetrahydrofolate + NADP(+). Catalyzes the folate-dependent formation of 5-methyl-uridine at position 54 (M-5-U54) in all tRNAs. In Picosynechococcus sp. (strain ATCC 27264 / PCC 7002 / PR-6) (Agmenellum quadruplicatum), this protein is Methylenetetrahydrofolate--tRNA-(uracil-5-)-methyltransferase TrmFO.